A 137-amino-acid polypeptide reads, in one-letter code: MIVRNLGDIRKTDRNVRSDGWASARMLLKDDGMGFSFHVTTLFAGSELRMHYQNHLEAVLVLKGTGTIEDLATGEVHALRPGVMYALDDHDRHIVRPETDILTACVFNPPVTGREVHDESGAYPADPELAREPVAAD.

The tract at residues 115 to 137 (EVHDESGAYPADPELAREPVAAD) is disordered.

Belongs to the ectoine synthase family.

It carries out the reaction (2S)-4-acetamido-2-aminobutanoate = L-ectoine + H2O. Its pathway is amine and polyamine biosynthesis; ectoine biosynthesis; L-ectoine from L-aspartate 4-semialdehyde: step 3/3. Its function is as follows. Catalyzes the circularization of gamma-N-acetyl-alpha,gamma-diaminobutyric acid (ADABA) to ectoine (1,4,5,6-tetrahydro-2-methyl-4-pyrimidine carboxylic acid), which is an excellent osmoprotectant. In Sphingopyxis alaskensis (strain DSM 13593 / LMG 18877 / RB2256) (Sphingomonas alaskensis), this protein is L-ectoine synthase.